The chain runs to 337 residues: Lipoyl synthase (337 aa).

7 residues coordinate [4Fe-4S] cluster: cysteine 81, cysteine 86, cysteine 92, cysteine 107, cysteine 111, cysteine 114, and serine 323. Residues 93-312 form the Radical SAM core domain; that stretch reads FSHGTATFMI…EDYGNALGFS (220 aa).

It belongs to the radical SAM superfamily. Lipoyl synthase family. [4Fe-4S] cluster serves as cofactor.

The protein resides in the cytoplasm. The catalysed reaction is [[Fe-S] cluster scaffold protein carrying a second [4Fe-4S](2+) cluster] + N(6)-octanoyl-L-lysyl-[protein] + 2 oxidized [2Fe-2S]-[ferredoxin] + 2 S-adenosyl-L-methionine + 4 H(+) = [[Fe-S] cluster scaffold protein] + N(6)-[(R)-dihydrolipoyl]-L-lysyl-[protein] + 4 Fe(3+) + 2 hydrogen sulfide + 2 5'-deoxyadenosine + 2 L-methionine + 2 reduced [2Fe-2S]-[ferredoxin]. The protein operates within protein modification; protein lipoylation via endogenous pathway; protein N(6)-(lipoyl)lysine from octanoyl-[acyl-carrier-protein]: step 2/2. Functionally, catalyzes the radical-mediated insertion of two sulfur atoms into the C-6 and C-8 positions of the octanoyl moiety bound to the lipoyl domains of lipoate-dependent enzymes, thereby converting the octanoylated domains into lipoylated derivatives. In Xanthomonas axonopodis pv. citri (strain 306), this protein is Lipoyl synthase.